A 151-amino-acid chain; its full sequence is Nucleoside diphosphate kinase (151 aa).

ATP-binding residues include lysine 11, phenylalanine 59, arginine 87, threonine 93, arginine 104, and asparagine 114. Histidine 117 serves as the catalytic Pros-phosphohistidine intermediate.

It belongs to the NDK family. In terms of assembly, homotetramer. It depends on Mg(2+) as a cofactor.

It is found in the cytoplasm. The catalysed reaction is a 2'-deoxyribonucleoside 5'-diphosphate + ATP = a 2'-deoxyribonucleoside 5'-triphosphate + ADP. The enzyme catalyses a ribonucleoside 5'-diphosphate + ATP = a ribonucleoside 5'-triphosphate + ADP. Functionally, major role in the synthesis of nucleoside triphosphates other than ATP. The ATP gamma phosphate is transferred to the NDP beta phosphate via a ping-pong mechanism, using a phosphorylated active-site intermediate. In Prochlorococcus marinus (strain NATL2A), this protein is Nucleoside diphosphate kinase.